The chain runs to 422 residues: UDP-N-acetylglucosamine 1-carboxyvinyltransferase (422 aa).

Residue 22–23 (KN) coordinates phosphoenolpyruvate. Arg95 contributes to the UDP-N-acetyl-alpha-D-glucosamine binding site. The active-site Proton donor is the Cys119. Position 119 is a 2-(S-cysteinyl)pyruvic acid O-phosphothioketal (Cys119). UDP-N-acetyl-alpha-D-glucosamine contacts are provided by residues 124–128 (RPIDQ), Asp309, and Val331.

It belongs to the EPSP synthase family. MurA subfamily.

It is found in the cytoplasm. It carries out the reaction phosphoenolpyruvate + UDP-N-acetyl-alpha-D-glucosamine = UDP-N-acetyl-3-O-(1-carboxyvinyl)-alpha-D-glucosamine + phosphate. It participates in cell wall biogenesis; peptidoglycan biosynthesis. In terms of biological role, cell wall formation. Adds enolpyruvyl to UDP-N-acetylglucosamine. The protein is UDP-N-acetylglucosamine 1-carboxyvinyltransferase of Anaeromyxobacter sp. (strain K).